A 369-amino-acid chain; its full sequence is uncharacterized protein (369 aa).

This is an uncharacterized protein from Caenorhabditis elegans.